Here is a 228-residue protein sequence, read N- to C-terminus: DNA mismatch repair protein MutH (228 aa).

Belongs to the MutH family.

It localises to the cytoplasm. Functionally, sequence-specific endonuclease that cleaves unmethylated GATC sequences. It is involved in DNA mismatch repair. The polypeptide is DNA mismatch repair protein MutH (Yersinia pseudotuberculosis serotype IB (strain PB1/+)).